Consider the following 1461-residue polypeptide: Calmodulin-regulated spectrin-associated protein 2 (1461 aa).

Residues Pro211–Glu324 enclose the Calponin-homology (CH) domain. The disordered stretch occupies residues Arg361–Ser389. Composition is skewed to low complexity over residues Asp362 to Ser371 and Ser380 to Ser389. Ser391 and Ser393 each carry phosphoserine. Thr401 is subject to Phosphothreonine. Phosphoserine is present on residues Ser439, Ser572, Ser573, Ser585, and Ser647. 2 disordered regions span residues Ser573–Ser613 and Ala639–Leu704. Thr652 is subject to Phosphothreonine. Ser654 is modified (phosphoserine). The span at Ser654–Ser673 shows a compositional bias: low complexity. Basic and acidic residues predominate over residues Gln677–Gly687. A coiled-coil region spans residues Leu730 to Met767. Basic and acidic residues predominate over residues Arg787–Met826. The tract at residues Arg787–Glu855 is disordered. A Phosphoserine modification is found at Ser836. Residues Glu861–Gln900 adopt a coiled-coil conformation. Residues Met896–Gly1007 are MBD region. Phosphoserine is present on residues Ser905 and Ser910. Disordered regions lie at residues Arg921 to Ser992, Val1004 to Glu1044, Asn1069 to Pro1090, Asp1102 to Gln1124, and Lys1163 to Gly1321. Over residues Ser926–Pro937 the composition is skewed to low complexity. Polar residues predominate over residues Ser943 to Pro962. 3 positions are modified to phosphothreonine: Thr970, Thr975, and Thr977. Ser981 and Ser992 each carry phosphoserine. Residues Glu1011–Glu1028 are compositionally biased toward basic and acidic residues. Residues Thr1077–Ala1089 show a composition bias toward pro residues. Composition is skewed to basic and acidic residues over residues Lys1104–Gln1124 and Lys1163–Ile1224. Ser1120 carries the phosphoserine modification. Residues Lys1138–Arg1210 are a coiled coil. Polar residues predominate over residues Ser1259–Ser1271. Ser1285, Ser1291, and Ser1293 each carry phosphoserine. Residues Asn1306 to Glu1318 are compositionally biased toward polar residues. The 135-residue stretch at Gly1321–Lys1455 folds into the CKK domain.

It belongs to the CAMSAP1 family. Interacts with CAMSAP3. Interacts with KATNA1 and KATNB1; leading to regulate the length of CAMSAP2-decorated microtubule stretches. Interacts with a complex formed by AKAP9 and PDE4DIP isoform 2/MMG8/SMYLE, which recruits CAMSAP2 to the Golgi. Interacts with MAPRE1/EB1.

It is found in the cytoplasm. It localises to the cytoskeleton. The protein localises to the golgi apparatus. The protein resides in the cilium basal body. Key microtubule-organizing protein that specifically binds the minus-end of non-centrosomal microtubules and regulates their dynamics and organization. Specifically recognizes growing microtubule minus-ends and autonomously decorates and stabilizes microtubule lattice formed by microtubule minus-end polymerization. Acts on free microtubule minus-ends that are not capped by microtubule-nucleating proteins or other factors and protects microtubule minus-ends from depolymerization. In addition, it also reduces the velocity of microtubule polymerization. Through the microtubule cytoskeleton, also regulates the organization of cellular organelles including the Golgi and the early endosomes. Essential for the tethering, but not for nucleation of non-centrosomal microtubules at the Golgi: together with Golgi-associated proteins AKAP9 and PDE4DIP, required to tether non-centrosomal minus-end microtubules to the Golgi, an important step for polarized cell movement. Also acts as a regulator of neuronal polarity and development: localizes to non-centrosomal microtubule minus-ends in neurons and stabilizes non-centrosomal microtubules, which is required for neuronal polarity, axon specification and dendritic branch formation. Through the microtubule cytoskeleton, regulates the autophagosome transport. This Mus musculus (Mouse) protein is Calmodulin-regulated spectrin-associated protein 2.